Reading from the N-terminus, the 805-residue chain is FAD-dependent monooxygenase verC1 (805 aa).

The signal sequence occupies residues methionine 1–alanine 20. FAD contacts are provided by glutamate 32, alanine 46, and arginine 107. Asparagine 132 carries N-linked (GlcNAc...) asparagine glycosylation. Tyrosine 214 is a catalytic residue. Residues aspartate 306 and alanine 319 each contribute to the FAD site. Transmembrane regions (helical) follow at residues alanine 551–glycine 571, isoleucine 604–tryptophan 624, serine 632–serine 652, leucine 671–tryptophan 691, valine 703–isoleucine 723, tryptophan 726–leucine 746, and isoleucine 761–leucine 781.

It belongs to the paxM FAD-dependent monooxygenase family.

It is found in the membrane. Its pathway is secondary metabolite biosynthesis; terpenoid biosynthesis. It functions in the pathway mycotoxin biosynthesis. In terms of biological role, FAD-dependent monooxygenase; part of the gene cluster that mediates the biosynthesis of the neurotoxin verrucosidin, a methylated alpha-pyrone polyketide that inhibits oxidative phosphorylation in mitochondria and thereby causes neurological diseases. The carbon backbone of verrucosidin is synthesized by the HR-PKS verA, and further modified by the other verrucodidin cluster enzymes. This chain is FAD-dependent monooxygenase verC1, found in Penicillium polonicum.